The following is a 231-amino-acid chain: LexA repressor (231 aa).

A DNA-binding region (H-T-H motif) is located at residues 26–46; sequence FEEMKEALDLKSKSGIHRLIG. Catalysis depends on for autocatalytic cleavage activity residues serine 152 and lysine 190.

This sequence belongs to the peptidase S24 family. In terms of assembly, homodimer.

The catalysed reaction is Hydrolysis of Ala-|-Gly bond in repressor LexA.. Represses a number of genes involved in the response to DNA damage (SOS response), including recA and lexA. In the presence of single-stranded DNA, RecA interacts with LexA causing an autocatalytic cleavage which disrupts the DNA-binding part of LexA, leading to derepression of the SOS regulon and eventually DNA repair. This is LexA repressor from Acidiphilium cryptum (strain JF-5).